A 340-amino-acid chain; its full sequence is Central glycolytic genes regulator (340 aa).

Positions 37–56 (RRSLSASLGISERVLRGEVQ) form a DNA-binding region, H-T-H motif. Beta-D-fructose 1,6-bisphosphate contacts are provided by residues 149–152 (GGTT), Arg-175, Gln-185, 250–251 (RR), Glu-269, and Lys-310.

It belongs to the SorC transcriptional regulatory family. As to quaternary structure, homotetramer. Binds primarily as a dimer to each half-site of the full-length operator, with much higher affinity for the right site. Then, both dimers interact, bridging the two-half sites of the operator region.

With respect to regulation, stability and function are regulated by the effector molecule fructose-1,6-bisphosphate (FBP). In the presence of glucose, binding of FBP to the low-affinity sugar-binding site of CggR disrupts dimer/dimer bridging interactions and triggers a tetramer to dimer transition, which leaves two physically independent dimers on the target DNA and allows transcription of the downstream coding sequences by the RNA polymerase. In addition, FBP and several other phosphorylated compounds can bind to a high-affinity binding-site and protect CggR against aggregation and proteolysis. Functionally, in the absence of glucose, represses the transcription of the gapA operon, which encodes five key glycolytic enzymes. Binds specifically to the cggR-gapA promoter region and blocks the progression of the RNA polymerase, leading to the arrest of the transcription. The chain is Central glycolytic genes regulator (cggR) from Bacillus subtilis (strain 168).